A 356-amino-acid polypeptide reads, in one-letter code: Tyrosine recombinase XerS (356 aa).

One can recognise a Core-binding (CB) domain in the interval 16-121; sequence IMPWYVLEYY…ALSSLYKYLT (106 aa). The 186-residue stretch at 169–354 folds into the Tyr recombinase domain; it reads GFLTYIDQEY…VNDEQKNALD (186 aa). Catalysis depends on residues Arg-210, Lys-234, His-306, Arg-309, and His-332. Tyr-341 (O-(3'-phospho-DNA)-tyrosine intermediate) is an active-site residue.

This sequence belongs to the 'phage' integrase family. XerS subfamily.

It localises to the cytoplasm. With respect to regulation, ftsK is required for recombination. In terms of biological role, site-specific tyrosine recombinase, which acts by catalyzing the cutting and rejoining of the recombining DNA molecules. Essential to convert dimers of the bacterial chromosome into monomers to permit their segregation at cell division. The chain is Tyrosine recombinase XerS from Streptococcus pneumoniae (strain Hungary19A-6).